A 409-amino-acid polypeptide reads, in one-letter code: Protein PHOSPHATE STARVATION RESPONSE 1 (409 aa).

The segment covering 1 to 15 (MEARPVHRSGSRDLT) has biased composition (basic and acidic residues). Disordered regions lie at residues 1–42 (MEAR…NSQL), 86–108 (EKQQ…NNDS), and 178–226 (ETNS…TGKA). Polar residues-rich tracts occupy residues 16 to 26 (RTSSIPSTQKP) and 90 to 108 (HYTG…NNDS). Positions 192 to 224 (QIPQPQIVQQQPSPSVELRPVSTTSSNSNNGTG) are enriched in low complexity. An HTH myb-type domain is found at 222 to 282 (GTGKARMRWT…HLQKYRTARY (61 aa)). The H-T-H motif DNA-binding region spans 253–278 (PKGVLKIMKVEGLTIYHVKSHLQKYR). Positions 314–334 (TEALRLQMEVQKQLHEQLEIQ) form a coiled coil. Positions 327 to 332 (LHEQLE) match the LHEQLE motif. Residues 358 to 370 (GLTKGTASTSDSA) are compositionally biased toward polar residues. The disordered stretch occupies residues 358 to 409 (GLTKGTASTSDSAAKSEQEDKKTADSKEVPEEETRKCEELESPQPKRPKIDN). The span at 371–396 (AKSEQEDKKTADSKEVPEEETRKCEE) shows a compositional bias: basic and acidic residues. At S399 the chain carries Phosphoserine.

The protein belongs to the MYB-CC family. In terms of assembly, homodimers and heterodimers. Interacts with SPX1 in a Pi-dependent manner. Does not interact with PHL2 or PHL3. In terms of processing, sumoylated by SIZ1. Sumoylation controls phosphate deficiency responses.

It is found in the nucleus. Functionally, transcription factor involved in phosphate starvation signaling. Binds as a dimer to P1BS, an imperfect palindromic sequence 5'-GNATATNC-3', to promote the expression of inorganic phosphate (Pi) starvation-responsive genes. SPX1 is a competitive inhibitor of this DNA-binding. PHR1 binding to its targets is low Pi-dependent. Regulates the expression of miR399. Regulates the expression of IPS1 (At3g09922), a non-coding RNA that mimics the target of miR399 to block the cleavage of PHO2 under Pi-deficient conditions. Regulates lipid remodeling and triacylglycerol accumulation during phosphorus starvation. Required for the shoot-specific hypoxic response. Regulates FER1 expression upon phosphate starvation, linking iron and phosphate homeostasis. Contributes to the homeostasis of both sulfate and phosphate in plants under phosphate deficiency. Required for adaptation to high light and retaining functional photosynthesis during phosphate starvation. Involved in the coregulation of Zn and Pi homeostasis. The protein is Protein PHOSPHATE STARVATION RESPONSE 1 of Arabidopsis thaliana (Mouse-ear cress).